Consider the following 114-residue polypeptide: Large ribosomal subunit protein uL22c (114 aa).

Belongs to the universal ribosomal protein uL22 family. In terms of assembly, part of the 50S ribosomal subunit.

Its subcellular location is the plastid. It is found in the chloroplast. This protein binds specifically to 23S rRNA. In terms of biological role, the globular domain of the protein is located near the polypeptide exit tunnel on the outside of the subunit, while an extended beta-hairpin is found that lines the wall of the exit tunnel in the center of the 70S ribosome. This is Large ribosomal subunit protein uL22c (rpl22) from Gracilaria tenuistipitata var. liui (Red alga).